The primary structure comprises 200 residues: NADH-quinone oxidoreductase subunit C (200 aa).

Belongs to the complex I 30 kDa subunit family. NDH-1 is composed of 14 different subunits. Subunits NuoB, C, D, E, F, and G constitute the peripheral sector of the complex.

It localises to the cell inner membrane. It carries out the reaction a quinone + NADH + 5 H(+)(in) = a quinol + NAD(+) + 4 H(+)(out). In terms of biological role, NDH-1 shuttles electrons from NADH, via FMN and iron-sulfur (Fe-S) centers, to quinones in the respiratory chain. The immediate electron acceptor for the enzyme in this species is believed to be ubiquinone. Couples the redox reaction to proton translocation (for every two electrons transferred, four hydrogen ions are translocated across the cytoplasmic membrane), and thus conserves the redox energy in a proton gradient. The chain is NADH-quinone oxidoreductase subunit C from Burkholderia thailandensis (strain ATCC 700388 / DSM 13276 / CCUG 48851 / CIP 106301 / E264).